The following is a 347-amino-acid chain: MKPPILFTILLTVISGTMIVLMSSHWLMIWIGFEMNTLAIIPILMKKSNPRAIEASTKYFLTQATASMILMMGITINLMYSGQWTMSKTLCPMASTMMTIALAMKLGLAPFHFWVPEVTQGVHMSSGLILLTWQKIAPLLVLYQISPTIDPNLLLPMAMMSVLIGGWGGLNQTQLRKILAYSSIAHMGWMATITLYNPTMMLLNLTIYIIMTLTTFMLFMHNSTTTTLSLSQTWNKTPLVTSLILMLMLSLGGLPPLSGFIPKWMIIQELTKNEMIIMPTLLAITALLNLYFYMRLTYTTTLTMFPSTNNMKMKWKFDNTKKMILLPPLTVISTMLLPITPLLSILD.

Transmembrane regions (helical) follow at residues 3 to 23 (PPIL…VLMS), 25 to 45 (HWLM…PILM), 59 to 79 (YFLT…INLM), 96 to 116 (TMMT…FWVP), 122 to 142 (VHMS…LLVL), 149 to 169 (IDPN…GWGG), 178 to 198 (ILAY…LYNP), 200 to 220 (MMLL…MLFM), 242 to 262 (SLIL…GFIP), 274 to 294 (EMII…YFYM), and 323 to 343 (MILL…TPLL).

The protein belongs to the complex I subunit 2 family. In terms of assembly, core subunit of respiratory chain NADH dehydrogenase (Complex I) which is composed of 45 different subunits. Interacts with TMEM242.

Its subcellular location is the mitochondrion inner membrane. It catalyses the reaction a ubiquinone + NADH + 5 H(+)(in) = a ubiquinol + NAD(+) + 4 H(+)(out). Core subunit of the mitochondrial membrane respiratory chain NADH dehydrogenase (Complex I) that is believed to belong to the minimal assembly required for catalysis. Complex I functions in the transfer of electrons from NADH to the respiratory chain. The immediate electron acceptor for the enzyme is believed to be ubiquinone. The polypeptide is NADH-ubiquinone oxidoreductase chain 2 (Suricata suricatta (Meerkat)).